We begin with the raw amino-acid sequence, 343 residues long: Ribosomal RNA small subunit methyltransferase H (343 aa).

S-adenosyl-L-methionine is bound by residues 39–41 (AGH), Asp-58, Phe-87, Asp-108, and Gln-115.

It belongs to the methyltransferase superfamily. RsmH family.

It is found in the cytoplasm. It carries out the reaction cytidine(1402) in 16S rRNA + S-adenosyl-L-methionine = N(4)-methylcytidine(1402) in 16S rRNA + S-adenosyl-L-homocysteine + H(+). Functionally, specifically methylates the N4 position of cytidine in position 1402 (C1402) of 16S rRNA. The protein is Ribosomal RNA small subunit methyltransferase H of Bifidobacterium adolescentis (strain ATCC 15703 / DSM 20083 / NCTC 11814 / E194a).